The following is a 211-amino-acid chain: Orotate phosphoribosyltransferase (211 aa).

A 5-phospho-alpha-D-ribose 1-diphosphate-binding site is contributed by Lys26. Orotate is bound at residue 34-35 (FF). Residues 72-73 (YK), Arg98, Lys99, Lys102, His104, and 123-131 (DDVITAGTA) each bind 5-phospho-alpha-D-ribose 1-diphosphate. Residues Thr127 and Arg155 each contribute to the orotate site.

This sequence belongs to the purine/pyrimidine phosphoribosyltransferase family. PyrE subfamily. As to quaternary structure, homodimer. The cofactor is Mg(2+).

The enzyme catalyses orotidine 5'-phosphate + diphosphate = orotate + 5-phospho-alpha-D-ribose 1-diphosphate. Its pathway is pyrimidine metabolism; UMP biosynthesis via de novo pathway; UMP from orotate: step 1/2. Catalyzes the transfer of a ribosyl phosphate group from 5-phosphoribose 1-diphosphate to orotate, leading to the formation of orotidine monophosphate (OMP). The polypeptide is Orotate phosphoribosyltransferase (Legionella pneumophila (strain Lens)).